The following is a 1005-amino-acid chain: Beta/gamma crystallin domain-containing protein 3 (1005 aa).

A phosphoserine mark is found at serine 122, serine 129, serine 130, serine 136, and serine 140. 2 disordered regions span residues glutamate 132 to valine 159 and asparagine 173 to threonine 198. Residues glutamine 180–alanine 189 are compositionally biased toward acidic residues. Beta/gamma crystallin 'Greek key' domains follow at residues glycine 367–leucine 416, glycine 462–glutamine 500, leucine 512–glycine 556, glycine 557–glutamine 599, serine 605–serine 647, glycine 648–glutamine 690, histidine 701–arginine 737, glycine 738–aspartate 781, and glycine 828–lysine 869. One can recognise a Ricin B-type lectin domain in the interval proline 871–glutamate 1003.

It belongs to the beta/gamma-crystallin family.

The sequence is that of Beta/gamma crystallin domain-containing protein 3 (Crybg3) from Mus musculus (Mouse).